The chain runs to 491 residues: UDP-N-acetylmuramate--L-alanine ligase (491 aa).

126-132 serves as a coordination point for ATP; the sequence is GTHGKTT.

The protein belongs to the MurCDEF family.

Its subcellular location is the cytoplasm. It carries out the reaction UDP-N-acetyl-alpha-D-muramate + L-alanine + ATP = UDP-N-acetyl-alpha-D-muramoyl-L-alanine + ADP + phosphate + H(+). It participates in cell wall biogenesis; peptidoglycan biosynthesis. Functionally, cell wall formation. This chain is UDP-N-acetylmuramate--L-alanine ligase, found in Escherichia coli (strain SE11).